A 404-amino-acid polypeptide reads, in one-letter code: Nuclear receptor subfamily 2 group F member 6 (404 aa).

The span at 1–15 (MAMVTGGWGGPGGDT) shows a compositional bias: gly residues. The disordered stretch occupies residues 1-49 (MAMVTGGWGGPGGDTNGVDKAGGYPRAAEDDSASPPGAASDAEPGDEER). Residues 33–42 (ASPPGAASDA) show a composition bias toward low complexity. Ser34 and Ser40 each carry phosphoserine. Positions 53 to 128 (QVDCVVCGDK…VGMRKEAVQR (76 aa)) form a DNA-binding region, nuclear receptor. The segment at 56 to 76 (CVVCGDKSSGKHYGVFTCEGC) adopts an NR C4-type zinc-finger fold. Position 83 is a phosphoserine (Ser83). The segment at 92–116 (CRSNRDCQIDQHHRNQCQYCRLKKC) adopts an NR C4-type zinc-finger fold. The NR LBD domain maps to 165–393 (PVSELIAQLL…TLIRDMLLSG (229 aa)). The important for dimerization stretch occupies residues 327 to 404 (LQEKAQVALT…TFNWPYGSGQ (78 aa)).

The protein belongs to the nuclear hormone receptor family. NR2 subfamily. In terms of assembly, binds DNA as dimer; homodimer and heterodimer with NR2F2 and probably NR2F1. Interacts with THRB. Expressed in heart, placenta, liver, skeletal muscle, kidney and pancreas.

The protein resides in the nucleus. Transcription factor predominantly involved in transcriptional repression. Binds to promoter/enhancer response elements that contain the imperfect 5'-AGGTCA-3' direct or inverted repeats with various spacings which are also recognized by other nuclear hormone receptors. Involved in modulation of hormonal responses. Represses transcriptional activity of the lutropin-choriogonadotropic hormone receptor/LHCGR gene, the renin/REN gene and the oxytocin-neurophysin/OXT gene. Represses the triiodothyronine-dependent and -independent transcriptional activity of the thyroid hormone receptor gene in a cell type-specific manner. The corepressing function towards thyroid hormone receptor beta/THRB involves at least in part the inhibition of THRB binding to triiodothyronine response elements (TREs) by NR2F6. Inhibits NFATC transcription factor DNA binding and subsequently its transcriptional activity. Acts as transcriptional repressor of IL-17 expression in Th-17 differentiated CD4(+) T cells and may be involved in induction and/or maintenance of peripheral immunological tolerance and autoimmunity. Involved in development of forebrain circadian clock; is required early in the development of the locus coeruleus (LC). The polypeptide is Nuclear receptor subfamily 2 group F member 6 (NR2F6) (Homo sapiens (Human)).